Reading from the N-terminus, the 46-residue chain is Antimicrobial peptide eNAP-1 (46 aa).

Cystine bridges form between Cys4-Cys16 and Cys10-Cys26.

This sequence belongs to the granulin family.

Its subcellular location is the secreted. Functionally, has antimicrobial activity against Gram-negative and Gram-positive bacteria. The polypeptide is Antimicrobial peptide eNAP-1 (Equus caballus (Horse)).